Consider the following 273-residue polypeptide: Pantothenate synthetase (273 aa).

27-34 serves as a coordination point for ATP; it reads MGALHNGH. Residue His34 is the Proton donor of the active site. Gln58 is a (R)-pantoate binding site. Residue Gln58 coordinates beta-alanine. 144 to 147 is a binding site for ATP; sequence GKKD. (R)-pantoate is bound at residue Gln150. ATP contacts are provided by residues Val173 and 181 to 184; that span reads LSSR.

It belongs to the pantothenate synthetase family. In terms of assembly, homodimer.

Its subcellular location is the cytoplasm. The enzyme catalyses (R)-pantoate + beta-alanine + ATP = (R)-pantothenate + AMP + diphosphate + H(+). It functions in the pathway cofactor biosynthesis; (R)-pantothenate biosynthesis; (R)-pantothenate from (R)-pantoate and beta-alanine: step 1/1. Functionally, catalyzes the condensation of pantoate with beta-alanine in an ATP-dependent reaction via a pantoyl-adenylate intermediate. The protein is Pantothenate synthetase of Campylobacter fetus subsp. fetus (strain 82-40).